Consider the following 449-residue polypeptide: Phosphoglucosamine mutase (449 aa).

The Phosphoserine intermediate role is filled by serine 101. Serine 101, aspartate 242, aspartate 244, and aspartate 246 together coordinate Mg(2+). The residue at position 101 (serine 101) is a Phosphoserine.

It belongs to the phosphohexose mutase family. Mg(2+) serves as cofactor. In terms of processing, activated by phosphorylation.

It catalyses the reaction alpha-D-glucosamine 1-phosphate = D-glucosamine 6-phosphate. In terms of biological role, catalyzes the conversion of glucosamine-6-phosphate to glucosamine-1-phosphate. The chain is Phosphoglucosamine mutase from Bradyrhizobium sp. (strain BTAi1 / ATCC BAA-1182).